Here is a 568-residue protein sequence, read N- to C-terminus: Proline--tRNA ligase (568 aa).

Belongs to the class-II aminoacyl-tRNA synthetase family. ProS type 1 subfamily. In terms of assembly, homodimer.

The protein localises to the cytoplasm. It carries out the reaction tRNA(Pro) + L-proline + ATP = L-prolyl-tRNA(Pro) + AMP + diphosphate. Functionally, catalyzes the attachment of proline to tRNA(Pro) in a two-step reaction: proline is first activated by ATP to form Pro-AMP and then transferred to the acceptor end of tRNA(Pro). As ProRS can inadvertently accommodate and process non-cognate amino acids such as alanine and cysteine, to avoid such errors it has two additional distinct editing activities against alanine. One activity is designated as 'pretransfer' editing and involves the tRNA(Pro)-independent hydrolysis of activated Ala-AMP. The other activity is designated 'posttransfer' editing and involves deacylation of mischarged Ala-tRNA(Pro). The misacylated Cys-tRNA(Pro) is not edited by ProRS. The chain is Proline--tRNA ligase from Halorhodospira halophila (strain DSM 244 / SL1) (Ectothiorhodospira halophila (strain DSM 244 / SL1)).